A 75-amino-acid polypeptide reads, in one-letter code: ATP synthase subunit c (75 aa).

Transmembrane regions (helical) follow at residues 9–29 (IGAGLAAIGMIGSGIGVGNIW) and 52–72 (IGFAVTEAIALFALVVALILL).

The protein belongs to the ATPase C chain family. As to quaternary structure, F-type ATPases have 2 components, F(1) - the catalytic core - and F(0) - the membrane proton channel. F(1) has five subunits: alpha(3), beta(3), gamma(1), delta(1), epsilon(1). F(0) has four main subunits: a(1), b(1), b'(1) and c(10-14). The alpha and beta chains form an alternating ring which encloses part of the gamma chain. F(1) is attached to F(0) by a central stalk formed by the gamma and epsilon chains, while a peripheral stalk is formed by the delta, b and b' chains.

Its subcellular location is the cell inner membrane. Functionally, f(1)F(0) ATP synthase produces ATP from ADP in the presence of a proton or sodium gradient. F-type ATPases consist of two structural domains, F(1) containing the extramembraneous catalytic core and F(0) containing the membrane proton channel, linked together by a central stalk and a peripheral stalk. During catalysis, ATP synthesis in the catalytic domain of F(1) is coupled via a rotary mechanism of the central stalk subunits to proton translocation. Its function is as follows. Key component of the F(0) channel; it plays a direct role in translocation across the membrane. A homomeric c-ring of between 10-14 subunits forms the central stalk rotor element with the F(1) delta and epsilon subunits. The chain is ATP synthase subunit c from Rhodospirillum rubrum (strain ATCC 11170 / ATH 1.1.1 / DSM 467 / LMG 4362 / NCIMB 8255 / S1).